The chain runs to 886 residues: Alanine--tRNA ligase (886 aa).

Positions 564, 568, 666, and 670 each coordinate Zn(2+).

It belongs to the class-II aminoacyl-tRNA synthetase family. Zn(2+) is required as a cofactor.

The protein resides in the cytoplasm. It catalyses the reaction tRNA(Ala) + L-alanine + ATP = L-alanyl-tRNA(Ala) + AMP + diphosphate. Functionally, catalyzes the attachment of alanine to tRNA(Ala) in a two-step reaction: alanine is first activated by ATP to form Ala-AMP and then transferred to the acceptor end of tRNA(Ala). Also edits incorrectly charged Ser-tRNA(Ala) and Gly-tRNA(Ala) via its editing domain. This chain is Alanine--tRNA ligase, found in Prochlorococcus marinus (strain MIT 9515).